Here is a 444-residue protein sequence, read N- to C-terminus: Endoglucanase N (444 aa).

Residues 1–31 form the signal peptide; the sequence is MWMRRNQIVRKLTLGVVTTVLGMSLSFSALS. Substrate contacts are provided by residues histidine 64, 68-69, tyrosine 95, and histidine 130; that span reads WF. The active-site Proton donor is the glutamate 168. Residue tyrosine 230 coordinates substrate. Glutamate 256 functions as the Nucleophile in the catalytic mechanism. Substrate is bound by residues 262-263, tryptophan 290, and 295-297; these read AS and KSE. The tract at residues 332–358 is disordered; that stretch reads ANLGGGDTPTTPTTPTEPTNPGNGTTG. Over residues 339–358 the composition is skewed to low complexity; that stretch reads TPTTPTTPTEPTNPGNGTTG. A CBM3 domain is found at 356-444; it reads TTGDVVLQYR…DKANRYVLVT (89 aa).

The protein belongs to the glycosyl hydrolase 5 (cellulase A) family.

Its subcellular location is the secreted. The catalysed reaction is Endohydrolysis of (1-&gt;4)-beta-D-glucosidic linkages in cellulose, lichenin and cereal beta-D-glucans.. This chain is Endoglucanase N (celN), found in Pectobacterium atrosepticum (Erwinia carotovora subsp. atroseptica).